Here is a 352-residue protein sequence, read N- to C-terminus: Cyclin-dependent kinase 7 (352 aa).

The region spanning 18 to 301 is the Protein kinase domain; that stretch reads YEKLDFLGEG…ASQALRKRYF (284 aa). Residues 24-32 and Lys47 contribute to the ATP site; that span reads LGEGQFATV. Asp143 functions as the Proton acceptor in the catalytic mechanism. Ser170 bears the Phosphoserine; by CDK1 and CDK2 mark. Phosphothreonine; by CDK2 is present on Thr176.

The protein belongs to the protein kinase superfamily. CMGC Ser/Thr protein kinase family. CDC2/CDKX subfamily. In terms of assembly, probably associates with cyclin-H (ccnh) and mat1 to form a multimeric active enzyme. In terms of processing, phosphorylation of Ser-170 during mitosis inactivates the enzyme. Phosphorylation of Thr-176 is required for activity. Phosphorylated at Ser-170 and Thr-176 by CDK2.

It is found in the nucleus. It catalyses the reaction L-seryl-[protein] + ATP = O-phospho-L-seryl-[protein] + ADP + H(+). The enzyme catalyses L-threonyl-[protein] + ATP = O-phospho-L-threonyl-[protein] + ADP + H(+). It carries out the reaction [DNA-directed RNA polymerase] + ATP = phospho-[DNA-directed RNA polymerase] + ADP + H(+). Its activity is regulated as follows. Phosphorylation at Thr-176 is required for enzymatic activity. In terms of biological role, serine/threonine kinase involved in cell cycle control and in RNA polymerase II-mediated RNA transcription. Cyclin-dependent kinases (CDKs) are activated by the binding to a cyclin and mediate the progression through the cell cycle. Each different complex controls a specific transition between 2 subsequent phases in the cell cycle. Required for both activation and complex formation of cdk1/cyclin-B during G2-M transition, and for activation of cdk2/cyclins during G1-S transition (but not complex formation). cdk7 is the catalytic subunit of the CDK-activating kinase (CAK) complex. CAK activates the cyclin-associated kinases cdk1, cdk2, cdk4 and cdk6 by threonine phosphorylation, thus regulating cell cycle progression. Initiates transcription by RNA polymerase II by mediating phosphorylation of polr2a at 'Ser-5' of the repetitive C-terminal domain (CTD) when polr2a is in complex with DNA, promoting dissociation from DNA and initiation. CAK complexed to the core-TFIIH basal transcription factor activates RNA polymerase II by serine phosphorylation of the CTD of polr2a, allowing its escape from the promoter and elongation of the transcripts. The polypeptide is Cyclin-dependent kinase 7 (cdk7) (Xenopus laevis (African clawed frog)).